The following is a 288-amino-acid chain: Structure-specific endonuclease subunit SLX1 (288 aa).

Residues 7 to 90 (PFYGVYLLQS…QHPNMTRLIT (84 aa)) form the GIY-YIG domain.

This sequence belongs to the SLX1 family. Forms a heterodimer with SLX4. It depends on a divalent metal cation as a cofactor.

Its subcellular location is the nucleus. In terms of biological role, catalytic subunit of the SLX1-SLX4 structure-specific endonuclease that resolves DNA secondary structures generated during DNA repair and recombination. Has endonuclease activity towards branched DNA substrates, introducing single-strand cuts in duplex DNA close to junctions with ss-DNA. The chain is Structure-specific endonuclease subunit SLX1 from Yarrowia lipolytica (strain CLIB 122 / E 150) (Yeast).